Here is a 526-residue protein sequence, read N- to C-terminus: MPLQAIPLFSLILPVLVAGKFPIYTIPDKIGPWSPIDINHLSCPNNLVVEDEGCTTLTAFSYMELKVGYITTIKVSGFTCTGVVTEAETYTNFVGYVTTTFRRKHFRPTASACREAYNWKATGDPRYEESLHNPYPDSHWLRTVKTTKESLLIISPSVADMDAYDKALYSKIFPNGKCLGVSLSSPFCSTNHDYTLWMPENPKPGVSCDIFTTSKGKKATKDGKLCGFVDERGLYKSLKGACKLKLCGVMGLRLMDGSWVSLQKTEESEWCSPNQLINIHDFHSDEIEHMVVEELVKKREECLDALESIMTTKSISFRRLSHLRKLVPGFGKAYTLINKTLMEADAHYKSVREWTEVIPSKGCLKAGGGCYPHYNRVFFNGIILSPDGHVLIPEMQSALLQQHIELLESSVIPLRHPLADPSTVFKGDDEAEEFVEVHLPDTQKQISGIDLGLPEWKRYFLMGMSAIGFLALTIILAVCCRRIKRRKQSKPNPVELIRKVSVTSQSGRAIPSWESYKVKTGDQPQV.

Residues 1 to 19 (MPLQAIPLFSLILPVLVAG) form the signal peptide. Residues 20–459 (KFPIYTIPDK…DLGLPEWKRY (440 aa)) lie on the Virion surface side of the membrane. A glycan (N-linked (GlcNAc...) asparagine; by host) is linked at asparagine 338. The helical transmembrane segment at 460-480 (FLMGMSAIGFLALTIILAVCC) threads the bilayer. Cysteine 480 is lipidated: S-palmitoyl cysteine; by host. At 481 to 526 (RRIKRRKQSKPNPVELIRKVSVTSQSGRAIPSWESYKVKTGDQPQV) the chain is on the intravirion side.

It belongs to the lyssavirus glycoprotein family. In terms of assembly, homotrimer. Interacts with matrix protein. Glycosylated and palmitoylated by host. Glycosylation is crucial for glycoprotein export at the cell surface.

Its subcellular location is the virion membrane. Functionally, attaches the virus to host cellular receptor, inducing endocytosis of the virion. In the endosome, the acidic pH induces conformational changes in the glycoprotein trimer, which trigger fusion between virus and cell membrane. There is convincing in vitro evidence that the muscular form of the nicotinic acetylcholine receptor (nAChR), the neuronal cell adhesion molecule (NCAM), and the p75 neurotrophin receptor (p75NTR) bind glycoprotein and thereby facilitate rabies virus entry into cells. The chain is Glycoprotein (G) from Myotis blythii (Lesser mouse-eared bat).